The primary structure comprises 704 residues: Mannan-binding lectin serine protease 1 (704 aa).

Positions 1–24 (MRFLSFRRLLLYHVLCLTLTEVSA) are cleaved as a signal peptide. The CUB 1 domain maps to 25 to 143 (HTVELNEMFG…TGFDAHYMAV (119 aa)). A homodimerization region spans residues 25 to 189 (HTVELNEMFG…HTDNRTCRVE (165 aa)). The interaction with MBL2 stretch occupies residues 25–189 (HTVELNEMFG…HTDNRTCRVE (165 aa)). An interaction with FCN2 region spans residues 25–283 (HTVELNEMFG…STQSHSIQIL (259 aa)). The interaction with MBL1 stretch occupies residues 25-305 (HTVELNEMFG…RLSYRAAGNE (281 aa)). N54 is a glycosylation site (N-linked (GlcNAc...) asparagine). The Ca(2+) site is built by E73, D81, D126, S128, D144, V145, and E147. An intrachain disulfide couples C78 to C96. An EGF-like; calcium-binding domain is found at 144–187 (DVDECKEREDEELSCDHYCHNYIGGYYCSCRFGYILHTDNRTCR). 4 disulfide bridges follow: C148–C162, C158–C171, C173–C186, and C190–C217. Positions 164, 165, and 168 each coordinate Ca(2+). N164 is modified ((3R)-3-hydroxyasparagine). N183 carries an N-linked (GlcNAc...) asparagine glycan. Residues 190–302 (CSGNLFTQRT…RGWRLSYRAA (113 aa)) form the CUB 2 domain. Positions 240, 250, 287, and 289 each coordinate Ca(2+). A disulfide bond links C247 and C265. Sushi domains lie at 304-369 (NECP…TCKI) and 370-439 (VDCG…TCLP). 6 disulfide bridges follow: C306-C354, C334-C367, C372-C419, C402-C437, C441-C577, and C480-C496. 2 N-linked (GlcNAc...) asparagine glycosylation sites follow: N390 and N412. The Peptidase S1 domain maps to 454-701 (IFNGRPAQKG…NKDWIQRVTG (248 aa)). H495 (charge relay system) is an active-site residue. L538 carries N-linked (GlcNAc...) asparagine glycosylation. The Charge relay system role is filled by D557. E604 is a glycosylation site (N-linked (GlcNAc...) asparagine). 2 disulfides stabilise this stretch: C619–C636 and C647–C677. The active-site Charge relay system is the S651.

Belongs to the peptidase S1 family. In terms of assembly, homodimer. Interacts with the oligomeric lectins MBL2, FCN2 and FCN3; triggers the lectin pathway of complement through activation of C3. Interacts with SERPING1. Interacts with COLEC11; probably triggers the lectin pathway of complement. The iron and 2-oxoglutarate dependent 3-hydroxylation of aspartate and asparagine is (R) stereospecific within EGF domains. In terms of processing, N-glycosylated. Some N-linked glycan are of the complex-type. Post-translationally, autoproteolytic processing of the proenzyme produces the active enzyme composed on the heavy and the light chain held together by a disulfide bond. Isoform 1 but not isoform 2 is activated through autoproteolytic processing. In terms of tissue distribution, protein of the plasma which is primarily expressed by liver.

The protein resides in the secreted. Inhibited by SERPING1 and A2M. Functions in the lectin pathway of complement, which performs a key role in innate immunity by recognizing pathogens through patterns of sugar moieties and neutralizing them. The lectin pathway is triggered upon binding of mannan-binding lectin (MBL) and ficolins to sugar moieties which leads to activation of the associated proteases MASP1 and MASP2. Functions as an endopeptidase and may activate MASP2 or C2 or directly activate C3 the key component of complement reaction. Isoform 2 may have an inhibitory effect on the activation of the lectin pathway of complement or may cleave IGFBP5. Also plays a role in development. The polypeptide is Mannan-binding lectin serine protease 1 (Masp1) (Rattus norvegicus (Rat)).